The primary structure comprises 400 residues: 1-deoxy-D-xylulose 5-phosphate reductoisomerase (400 aa).

Residues T10, G11, S12, I13, G36, N38, and N124 each contribute to the NADPH site. A 1-deoxy-D-xylulose 5-phosphate-binding site is contributed by K125. E126 contacts NADPH. D150 lines the Mn(2+) pocket. The 1-deoxy-D-xylulose 5-phosphate site is built by S151, E152, S186, and H209. Position 152 (E152) interacts with Mn(2+). G215 is an NADPH binding site. The 1-deoxy-D-xylulose 5-phosphate site is built by S222, N227, K228, and E231. A Mn(2+)-binding site is contributed by E231.

It belongs to the DXR family. The cofactor is Mg(2+). Mn(2+) serves as cofactor.

It catalyses the reaction 2-C-methyl-D-erythritol 4-phosphate + NADP(+) = 1-deoxy-D-xylulose 5-phosphate + NADPH + H(+). Its pathway is isoprenoid biosynthesis; isopentenyl diphosphate biosynthesis via DXP pathway; isopentenyl diphosphate from 1-deoxy-D-xylulose 5-phosphate: step 1/6. Its function is as follows. Catalyzes the NADPH-dependent rearrangement and reduction of 1-deoxy-D-xylulose-5-phosphate (DXP) to 2-C-methyl-D-erythritol 4-phosphate (MEP). The polypeptide is 1-deoxy-D-xylulose 5-phosphate reductoisomerase (Aliivibrio salmonicida (strain LFI1238) (Vibrio salmonicida (strain LFI1238))).